The following is a 716-amino-acid chain: Antibacterial effector protein Tle3 (716 aa).

Residues 68–87 (PTLPGGQANPGYLTPAGYSL) form a disordered region.

Interacts in the cytoplasm with the adapter protein Tla3. Interacts in the periplasm with the immunity protein Tli3.

The protein localises to the secreted. It localises to the host periplasm. Its activity is regulated as follows. Neutralized by the immunity protein Tli3 in the periplasm of P.aeruginosa cells. In terms of biological role, antibacterial effector. Is toxic once delivered in the periplasm of prey bacteria. This Pseudomonas aeruginosa (strain ATCC 15692 / DSM 22644 / CIP 104116 / JCM 14847 / LMG 12228 / 1C / PRS 101 / PAO1) protein is Antibacterial effector protein Tle3.